Reading from the N-terminus, the 155-residue chain is Transcriptional repressor NrdR (155 aa).

The segment at 3-34 (CPFCNQTDTKVIDSRLVADGVQVRRRRECQAC) is a zinc-finger region. Residues 49–139 (PKVIKQDGTR…VYRSFQDISE (91 aa)) enclose the ATP-cone domain.

Belongs to the NrdR family. It depends on Zn(2+) as a cofactor.

Functionally, negatively regulates transcription of bacterial ribonucleotide reductase nrd genes and operons by binding to NrdR-boxes. This chain is Transcriptional repressor NrdR, found in Teredinibacter turnerae (strain ATCC 39867 / T7901).